The sequence spans 78 residues: U7-lycotoxin-Ls1d (78 aa).

A signal peptide spans 1–22 (MKLIIFTGLALLLIVSLIDVEA). Residues 23-26 (QNEG) constitute a propeptide that is removed on maturation.

Belongs to the neurotoxin 19 (CSTX) family. 07 (U7-Lctx) subfamily. Contains 4 disulfide bonds. As to expression, expressed by the venom gland.

It is found in the secreted. The polypeptide is U7-lycotoxin-Ls1d (Lycosa singoriensis (Wolf spider)).